We begin with the raw amino-acid sequence, 301 residues long: MTGAVSLLETLQQAVPLAGFTSFRVGGLAQFYDEPASVEAIATAWQWARLADFPVTFLGAGSNLLISDRGLPGLVLNLRRLQGATFDLATGCVEVAAGEPIPRLAWAAARQGWSGLEWAVGIPGTLGGAVVMNAGAQGGCMADILQSVQVITDQGLETWSREQLQYDYRHSVLQTGHACVVSAQLQLQPGFERSQVLTTTSTNFRQRKRTQPYHLPNCGSVFRNPEPQKAGQLIEACGLKGYQIGDAQVSELHANFILNCGAARAQDILSLIRHVQGTVGDHFGVNLHPEVKLLGEFQDVI.

Positions 24-190 (RVGGLAQFYD…VSAQLQLQPG (167 aa)) constitute an FAD-binding PCMH-type domain. Residue Arg169 is part of the active site. Ser220 serves as the catalytic Proton donor. The active site involves Glu290.

This sequence belongs to the MurB family. Requires FAD as cofactor.

It localises to the cytoplasm. The enzyme catalyses UDP-N-acetyl-alpha-D-muramate + NADP(+) = UDP-N-acetyl-3-O-(1-carboxyvinyl)-alpha-D-glucosamine + NADPH + H(+). Its pathway is cell wall biogenesis; peptidoglycan biosynthesis. Functionally, cell wall formation. The polypeptide is UDP-N-acetylenolpyruvoylglucosamine reductase (Synechococcus sp. (strain ATCC 27144 / PCC 6301 / SAUG 1402/1) (Anacystis nidulans)).